The following is a 115-amino-acid chain: Thrombospondin type-1 domain-containing protein 8 (115 aa).

Positions 1-21 are cleaved as a signal peptide; that stretch reads MARTPGALLLAPLLLLQLATP. Residues 53-104 enclose the TSP type-1 domain; sequence DSILGPWGKWRCLCDLGKQERSREVVGTAPGPVFMDPEKLIQLRPCRQRDCP.

This Homo sapiens (Human) protein is Thrombospondin type-1 domain-containing protein 8.